Consider the following 320-residue polypeptide: Annexin A5 (320 aa).

At A2 the chain carries N-acetylalanine. Annexin repeat units lie at residues 15 to 86 (FDER…ALMK), 87 to 158 (PSRL…VLLQ), 170 to 242 (AQVE…AVVK), and 246 to 317 (SIPA…LLCG). K29 participates in a covalent cross-link: Glycyl lysine isopeptide (Lys-Gly) (interchain with G-Cter in SUMO1); alternate. K29 participates in a covalent cross-link: Glycyl lysine isopeptide (Lys-Gly) (interchain with G-Cter in SUMO2); alternate. S37 carries the post-translational modification Phosphoserine. 5 positions are modified to N6-acetyllysine: K70, K76, K79, K97, and K101. Residue K290 is modified to N6-succinyllysine. The [IL]-x-C-x-x-[DE] motif motif lies at 314–320 (LLCGGED).

Belongs to the annexin family. In terms of assembly, monomer. Binds ATRX and EIF5B. S-nitrosylation is induced by interferon-gamma and oxidatively-modified low-densitity lipoprotein (LDL(ox)) possibly implicating the iNOS-S100A8/9 transnitrosylase complex.

Functionally, this protein is an anticoagulant protein that acts as an indirect inhibitor of the thromboplastin-specific complex, which is involved in the blood coagulation cascade. The sequence is that of Annexin A5 (ANXA5) from Macaca fascicularis (Crab-eating macaque).